Here is a 105-residue protein sequence, read N- to C-terminus: Nitrogenase-stabilizing/protective protein NifW (105 aa).

It belongs to the NifW family. In terms of assembly, homotrimer; associates with NifD.

In terms of biological role, may protect the nitrogenase Fe-Mo protein from oxidative damage. The sequence is that of Nitrogenase-stabilizing/protective protein NifW from Nostoc punctiforme (strain ATCC 29133 / PCC 73102).